The chain runs to 36 residues: Photosystem I reaction center subunit VIII (36 aa).

The helical transmembrane segment at 9 to 29 threads the bilayer; the sequence is ILVPLVGLIFPAIAMTSLFIY.

Belongs to the PsaI family.

The protein localises to the plastid. Its subcellular location is the chloroplast thylakoid membrane. In terms of biological role, may help in the organization of the PsaL subunit. In Tupiella akineta (Green alga), this protein is Photosystem I reaction center subunit VIII.